We begin with the raw amino-acid sequence, 134 residues long: Putative protein KRIP1 (134 aa).

The disordered stretch occupies residues 1–134; it reads MSPVHRSRTS…PDPALPLQML (134 aa). Composition is skewed to polar residues over residues 9-24, 43-55, and 64-79; these read TSQT…TLSF, SQPN…SHVS, and CSQS…TNPN. Residues 119 to 128 are compositionally biased toward pro residues; that stretch reads PAKPALPDPA.

In terms of tissue distribution, abundant expression is found in prostate, restricted to cells of epithelial origin in normal and diseased glands. Very low expression is detected in pancreas and ovary.

The protein localises to the cytoplasm. It is found in the nucleus. This Homo sapiens (Human) protein is Putative protein KRIP1 (KLKP1).